The primary structure comprises 319 residues: tRNA U34 carboxymethyltransferase (319 aa).

Carboxy-S-adenosyl-L-methionine is bound by residues Lys-88, Trp-102, Lys-107, Gly-126, 176 to 177 (LE), Met-192, Tyr-196, and Arg-311.

It belongs to the class I-like SAM-binding methyltransferase superfamily. CmoB family. As to quaternary structure, homotetramer.

The catalysed reaction is carboxy-S-adenosyl-L-methionine + 5-hydroxyuridine(34) in tRNA = 5-carboxymethoxyuridine(34) in tRNA + S-adenosyl-L-homocysteine + H(+). In terms of biological role, catalyzes carboxymethyl transfer from carboxy-S-adenosyl-L-methionine (Cx-SAM) to 5-hydroxyuridine (ho5U) to form 5-carboxymethoxyuridine (cmo5U) at position 34 in tRNAs. This chain is tRNA U34 carboxymethyltransferase, found in Pseudomonas savastanoi pv. phaseolicola (strain 1448A / Race 6) (Pseudomonas syringae pv. phaseolicola (strain 1448A / Race 6)).